Reading from the N-terminus, the 188-residue chain is Elongation factor P (188 aa).

An N6-(3,6-diaminohexanoyl)-5-hydroxylysine modification is found at Lys-34.

Belongs to the elongation factor P family. Post-translationally, may be beta-lysylated on the epsilon-amino group of Lys-34 by the combined action of EpmA and EpmB, and then hydroxylated on the C5 position of the same residue by EpmC (if this protein is present). Lysylation is critical for the stimulatory effect of EF-P on peptide-bond formation. The lysylation moiety may extend toward the peptidyltransferase center and stabilize the terminal 3-CCA end of the tRNA. Hydroxylation of the C5 position on Lys-34 may allow additional potential stabilizing hydrogen-bond interactions with the P-tRNA.

It localises to the cytoplasm. Its pathway is protein biosynthesis; polypeptide chain elongation. Its function is as follows. Involved in peptide bond synthesis. Alleviates ribosome stalling that occurs when 3 or more consecutive Pro residues or the sequence PPG is present in a protein, possibly by augmenting the peptidyl transferase activity of the ribosome. Modification of Lys-34 is required for alleviation. This Cronobacter sakazakii (strain ATCC BAA-894) (Enterobacter sakazakii) protein is Elongation factor P.